Consider the following 169-residue polypeptide: Anaerobic nitrite reductase NSHB2 (169 aa).

The 151-residue stretch at 16-166 (SFSEEQEALV…LVAAIKQEMK (151 aa)) folds into the Globin domain. The Homodimerization signature appears at 49–53 (EVAPS). Positions 59, 73, 77, 107, 111, and 112 each coordinate heme b. The Homodimerization signature appears at 119–131 (DAHFEVTRFALLE).

Belongs to the plant globin family. Homodimer. Requires heme b as cofactor. Expressed in leaves, but not in roots. Present in embryonic organs including embryos, coleoptiles and seminal roots.

It localises to the cytoplasm. The protein resides in the nucleus. It carries out the reaction Fe(III)-heme b-[protein] + nitric oxide + H2O = Fe(II)-heme b-[protein] + nitrite + 2 H(+). In terms of biological role, phytoglobin that reduces nitrite to nitric oxide under anoxic conditions (e.g. during flooding or in waterlogged soil). May not function as an oxygen storage or transport protein. Has an unusually high affinity for O(2) through an hexacoordinate heme iron because of a very low dissociation constant. Promotes tolerance to low potassium K(+) conditions. The protein is Anaerobic nitrite reductase NSHB2 of Oryza sativa subsp. japonica (Rice).